The primary structure comprises 346 residues: Large ribosomal subunit protein uL3 (346 aa).

Positions 324–346 (RPPKKKPPVERPQITYVSRESKQ) are disordered.

It belongs to the universal ribosomal protein uL3 family. Part of the 50S ribosomal subunit. Forms a cluster with proteins L14 and L24e.

Functionally, one of the primary rRNA binding proteins, it binds directly near the 3'-end of the 23S rRNA, where it nucleates assembly of the 50S subunit. The protein is Large ribosomal subunit protein uL3 of Thermococcus kodakarensis (strain ATCC BAA-918 / JCM 12380 / KOD1) (Pyrococcus kodakaraensis (strain KOD1)).